Reading from the N-terminus, the 438-residue chain is Cell division cycle-associated 7-like protein (438 aa).

An Integrase domain-binding motif 1 (IBM1) motif is present at residues 9–33; the sequence is IPKEVADIFSAPSDDEEFVGFQDDV. At Ser-21 the chain carries Phosphoserine. Positions 56-115 are PSIP1-binding; sequence VCFRSKYFTEELRRIFKEDTDSEMEDFEGFTESELNMSSNPELMESELSDSDKAYPVMND. The Integrase domain-binding motif 2 (IBM2) motif lies at 63 to 89; the sequence is FTEELRRIFKEDTDSEMEDFEGFTESE. The disordered stretch occupies residues 74–199; it reads DTDSEMEDFE…ESRAESQENS (126 aa). A Phosphothreonine modification is found at Thr-75. Acidic residues predominate over residues 75 to 86; it reads TDSEMEDFEGFT. Ser-77 carries the phosphoserine modification. Thr-86 is modified (phosphothreonine). 5 positions are modified to phosphoserine: Ser-101, Ser-104, Ser-135, Ser-136, and Ser-159. The segment covering 152 to 167 has biased composition (basic and acidic residues); it reads RTPDKDSSHLLDSKTD. Basic residues predominate over residues 168–177; it reads LRRKKSSRQP. 2 positions are modified to phosphoserine: Ser-183 and Ser-185. The MYC-binding stretch occupies residues 201-223; sequence ALLKRAMNIKENKAMLAQLLAEL. Residues Lys-210 and Lys-213 each participate in a glycyl lysine isopeptide (Lys-Gly) (interchain with G-Cter in SUMO2) cross-link. Ser-249 bears the Phosphoserine mark.

In terms of assembly, interacts with MYC. Interacts (via IBM motifs) with PSIP1 (via IBD domain); phosphorylation increases its affinity for PSIP1. Phosphorylation increases its interaction with PSIP1. Expressed in all tissues but not detected in total brain.

It is found in the cytoplasm. Its subcellular location is the nucleus. In terms of biological role, plays a role in transcriptional regulation as a repressor that inhibits monoamine oxidase A (MAOA) activity and gene expression by binding to the promoter. Plays an important oncogenic role in mediating the full transforming effect of MYC in medulloblastoma cells. Involved in apoptotic signaling pathways; May act downstream of P38-kinase and BCL-2, but upstream of CASP3/caspase-3 as well as CCND1/cyclin D1 and E2F1. This chain is Cell division cycle-associated 7-like protein (Cdca7l), found in Mus musculus (Mouse).